Here is a 1016-residue protein sequence, read N- to C-terminus: Calmodulin-binding transcription activator 4 (1016 aa).

Residues 38-164 (ISTLYQEAHS…YRDVSEREEG (127 aa)) constitute a DNA-binding region (CG-1). The segment at 324–343 (KNGSGPSGGTGGSGDQGSES) is disordered. The segment covering 328 to 338 (GPSGGTGGSGD) has biased composition (gly residues). ANK repeat units lie at residues 647-676 (QEQG…NVDF), 680-709 (KGWS…SAGA), and 719-748 (NGKT…TNHL). The interval 753–786 (LEETENSKDTAQVQTEKTLNSISEQSPSGNEDQV) is disordered. Residues 761-785 (DTAQVQTEKTLNSISEQSPSGNEDQ) are compositionally biased toward polar residues. IQ domains lie at 798 to 827 (AAQA…LVAC), 855 to 884 (YNSA…KVVK), and 878 to 907 (LRQK…AVRI). Residues 903-925 (WAVRILDKVVLRWRRKGVGLRGF) are calmodulin-binding. Phosphoserine occurs at positions 935 and 962.

The protein belongs to the CAMTA family. Expressed in roots, stems, leaves, flowers and siliques.

The protein resides in the nucleus. Functionally, transcription activator that binds to the DNA consensus sequence 5'-[ACG]CGCG[GTC]-3'. Regulates transcriptional activity in response to calcium signals. Binds calmodulin in a calcium-dependent manner. Involved together with CAMTA2 and CAMTA3 in the positive regulation of a general stress response. This is Calmodulin-binding transcription activator 4 from Arabidopsis thaliana (Mouse-ear cress).